A 321-amino-acid polypeptide reads, in one-letter code: 4-hydroxy-3-methylbut-2-enyl diphosphate reductase (321 aa).

Cys-13 is a binding site for [4Fe-4S] cluster. (2E)-4-hydroxy-3-methylbut-2-enyl diphosphate-binding residues include His-41 and His-75. Residues His-41 and His-75 each coordinate dimethylallyl diphosphate. Positions 41 and 75 each coordinate isopentenyl diphosphate. Residue Cys-97 coordinates [4Fe-4S] cluster. His-125 is a binding site for (2E)-4-hydroxy-3-methylbut-2-enyl diphosphate. A dimethylallyl diphosphate-binding site is contributed by His-125. His-125 provides a ligand contact to isopentenyl diphosphate. Residue Glu-127 is the Proton donor of the active site. Position 168 (Thr-168) interacts with (2E)-4-hydroxy-3-methylbut-2-enyl diphosphate. Position 225 (Cys-225) interacts with [4Fe-4S] cluster. (2E)-4-hydroxy-3-methylbut-2-enyl diphosphate-binding residues include Ser-253, Ser-254, Asn-255, and Ser-302. The dimethylallyl diphosphate site is built by Ser-253, Ser-254, Asn-255, and Ser-302. Residues Ser-253, Ser-254, Asn-255, and Ser-302 each coordinate isopentenyl diphosphate.

This sequence belongs to the IspH family. Requires [4Fe-4S] cluster as cofactor.

The catalysed reaction is isopentenyl diphosphate + 2 oxidized [2Fe-2S]-[ferredoxin] + H2O = (2E)-4-hydroxy-3-methylbut-2-enyl diphosphate + 2 reduced [2Fe-2S]-[ferredoxin] + 2 H(+). The enzyme catalyses dimethylallyl diphosphate + 2 oxidized [2Fe-2S]-[ferredoxin] + H2O = (2E)-4-hydroxy-3-methylbut-2-enyl diphosphate + 2 reduced [2Fe-2S]-[ferredoxin] + 2 H(+). The protein operates within isoprenoid biosynthesis; dimethylallyl diphosphate biosynthesis; dimethylallyl diphosphate from (2E)-4-hydroxy-3-methylbutenyl diphosphate: step 1/1. It participates in isoprenoid biosynthesis; isopentenyl diphosphate biosynthesis via DXP pathway; isopentenyl diphosphate from 1-deoxy-D-xylulose 5-phosphate: step 6/6. In terms of biological role, catalyzes the conversion of 1-hydroxy-2-methyl-2-(E)-butenyl 4-diphosphate (HMBPP) into a mixture of isopentenyl diphosphate (IPP) and dimethylallyl diphosphate (DMAPP). Acts in the terminal step of the DOXP/MEP pathway for isoprenoid precursor biosynthesis. The polypeptide is 4-hydroxy-3-methylbut-2-enyl diphosphate reductase (Pelodictyon phaeoclathratiforme (strain DSM 5477 / BU-1)).